The sequence spans 175 residues: ATP-dependent protease subunit HslV (175 aa).

Residue Thr-2 is part of the active site. Residues Ala-156, Cys-159, and Thr-162 each contribute to the Na(+) site.

This sequence belongs to the peptidase T1B family. HslV subfamily. In terms of assembly, a double ring-shaped homohexamer of HslV is capped on each side by a ring-shaped HslU homohexamer. The assembly of the HslU/HslV complex is dependent on binding of ATP.

The protein localises to the cytoplasm. The enzyme catalyses ATP-dependent cleavage of peptide bonds with broad specificity.. Allosterically activated by HslU binding. Protease subunit of a proteasome-like degradation complex believed to be a general protein degrading machinery. The protein is ATP-dependent protease subunit HslV of Rhizobium etli (strain CIAT 652).